Reading from the N-terminus, the 741-residue chain is Pentatricopeptide repeat-containing protein At1g08070, chloroplastic (741 aa).

PPR repeat units lie at residues 98 to 132, 133 to 167, 168 to 202, 203 to 229, 230 to 264, 265 to 299, 300 to 330, 331 to 365, 366 to 396, 403 to 433, 434 to 468, 469 to 499, and 505 to 535; these read NLLIWNTMFRGHALSSDPVSALKLYVCMISLGLLP, NSYTFPFVLKSCAKSKAFKEGQQIHGHVLKLGCDL, DLYVHTSLISMYVQNGRLEDAHKVFDKSPHRDVVS, YTALIKGYASRGYIENAQKLFDEIPVK, DVVSWNAMISGYAETGNYKEALELFKDMMKTNVRP, DESTMVTVVSACAQSGSIELGRQVHLWIDDHGFGS, NLKIVNALIDLYSKCGELETACGLFERLPYK, DVISWNTLIGGYTHMNLYKEALLLFQEMLRSGETP, NDVTMLSILPACAHLGAIDIGRWIHVYIDKR, ASSLRTSLIDMYAKCGDIEAAHQVFNSILHK, SLSSWNAMIFGFAMHGRADASFDLFSRMRKIGIQP, DDITFVGLLSACSHSGMLDLGRHIFRTMTQD, and KLEHYGCMIDLLGHSGLFKEAEEMINMMEME. The segment at 540–615 is type E motif; sequence IWCSLLKACK…VPGCSSIEID (76 aa). The segment at 616–646 is type E(+) motif; it reads SVVHEFIIGDKFHPRNREIYGMLEEMEVLLE. Positions 647 to 741 are type DYW motif; sequence KAGFVPDTSE…DGVCSCNDYW (95 aa).

It belongs to the PPR family. PCMP-H subfamily. Interacts with ORRM1. Interacts with VAR3/OZ1.

It localises to the plastid. It is found in the chloroplast. In terms of biological role, involved in multiple sites RNA editing events in chloroplasts. Involved in the editing of the site 9 of ndhB (ndhB-9) and site 1 of ndhG (ndhG-1) transcripts, which are two plastid-encoded subunits of the chloroplast NAD(P)H dehydrogenase (NDH) complex. Not essential for the activity of the NDH complex of the photosynthetic electron transport chain. The protein is Pentatricopeptide repeat-containing protein At1g08070, chloroplastic (PCMP-H12) of Arabidopsis thaliana (Mouse-ear cress).